The sequence spans 135 residues: MGILEKKTAGPGGAARKTTTRAAGMAAEDRALAHLQAAGLRLLARNYRTPGRGGGEIDLILRDRDGTLVFVEVRSRASDAYGGAGASIGAAKRRRIVFAARHYLLRWPSPPPCRFDAVLVSGDAVQWLQAAFDAG.

The interval 1–21 is disordered; that stretch reads MGILEKKTAGPGGAARKTTTR.

Belongs to the UPF0102 family.

The protein is UPF0102 protein Aave_0630 of Paracidovorax citrulli (strain AAC00-1) (Acidovorax citrulli).